Reading from the N-terminus, the 261-residue chain is Glutamate racemase (261 aa).

Substrate is bound by residues 9 to 10 and 41 to 42; these read DS and YG. The Proton donor/acceptor role is filled by cysteine 73. 74-75 lines the substrate pocket; sequence NT. Cysteine 179 acts as the Proton donor/acceptor in catalysis. 180–181 provides a ligand contact to substrate; the sequence is TH.

Belongs to the aspartate/glutamate racemases family.

It carries out the reaction L-glutamate = D-glutamate. Its pathway is cell wall biogenesis; peptidoglycan biosynthesis. In terms of biological role, provides the (R)-glutamate required for cell wall biosynthesis. The protein is Glutamate racemase of Aliivibrio fischeri (strain MJ11) (Vibrio fischeri).